We begin with the raw amino-acid sequence, 196 residues long: Alpha-crystallin A chain (196 aa).

N-acetylmethionine is present on methionine 1. The required for complex formation with BFSP1 and BFSP2 stretch occupies residues 1-63; the sequence is MDVTIQHPWF…RTVLDSGISE (63 aa). The residue at position 6 (glutamine 6) is a Deamidated glutamine; partial. At serine 45 the chain carries Phosphoserine. Glutamine 50 is modified (deamidated glutamine; partial). In terms of domain architecture, sHSP spans 76–185; sequence HAGNPKNNPI…GHSERAIPVS (110 aa). 2 positions are modified to N6-acetyllysine: lysine 93 and lysine 122. Histidine 123 lines the Zn(2+) pocket. Position 124 is a deamidated asparagine; partial (asparagine 124). Positions 125 and 130 each coordinate Zn(2+). Serine 145 is subject to Phosphoserine. A Deamidated asparagine; partial modification is found at asparagine 146. Positions 168–196 are disordered; sequence KVQSGLDAGHSERAIPVSREEKPSSAPSS. Deamidated glutamine; partial is present on glutamine 170. Basic and acidic residues predominate over residues 176 to 190; sequence GHSERAIPVSREEKP. Histidine 177 serves as a coordination point for Zn(2+). Serine 185 is a glycosylation site (O-linked (GlcNAc) serine).

It belongs to the small heat shock protein (HSP20) family. As to quaternary structure, heteromer composed of three CRYAA and one CRYAB subunits. Inter-subunit bridging via zinc ions enhances stability, which is crucial as there is no protein turn over in the lens. Can also form homodimers and homotetramers (dimers of dimers) which serve as the building blocks of homooligomers. Within homooligomers, the zinc-binding motif is created from residues of 3 different molecules. His-123 and Glu-125 from one molecule are ligands of the zinc ion, and His-130 and His-177 residues from additional molecules complete the site with tetrahedral coordination geometry. Part of a complex required for lens intermediate filament formation composed of BFSP1, BFSP2 and CRYAA. Post-translationally, acetylation at Lys-93 may increase chaperone activity. Undergoes age-dependent proteolytical cleavage at the C-terminus.

The protein resides in the cytoplasm. Its subcellular location is the nucleus. Its function is as follows. Contributes to the transparency and refractive index of the lens. Acts as a chaperone, preventing aggregation of various proteins under a wide range of stress conditions. Required for the correct formation of lens intermediate filaments as part of a complex composed of BFSP1, BFSP2 and CRYAA. In Mesocricetus auratus (Golden hamster), this protein is Alpha-crystallin A chain (CRYAA).